Here is a 375-residue protein sequence, read N- to C-terminus: Myb family transcription factor PHL5 (375 aa).

Positions 159 to 171 (TSSQHQPKQSHPR) are enriched in polar residues. The segment at 159 to 178 (TSSQHQPKQSHPRFSSPPSF) is disordered. An HTH myb-type domain is found at 189-249 (CVNKTRIRWT…HLQKYRIAKY (61 aa)). A DNA-binding region (H-T-H motif) is located at residues 220-245 (PKAILKRMDSDGLTIFHVKSHLQKYR). The stretch at 279-299 (KEALQLQLDVQRHLHEQLEIQ) forms a coiled coil. The LHEQLE motif lies at 292 to 297 (LHEQLE).

The protein belongs to the MYB-CC family.

Its subcellular location is the nucleus. The polypeptide is Myb family transcription factor PHL5 (Arabidopsis thaliana (Mouse-ear cress)).